A 416-amino-acid polypeptide reads, in one-letter code: Gamma-glutamyl phosphate reductase (416 aa).

This sequence belongs to the gamma-glutamyl phosphate reductase family.

It is found in the cytoplasm. The catalysed reaction is L-glutamate 5-semialdehyde + phosphate + NADP(+) = L-glutamyl 5-phosphate + NADPH + H(+). It participates in amino-acid biosynthesis; L-proline biosynthesis; L-glutamate 5-semialdehyde from L-glutamate: step 2/2. In terms of biological role, catalyzes the NADPH-dependent reduction of L-glutamate 5-phosphate into L-glutamate 5-semialdehyde and phosphate. The product spontaneously undergoes cyclization to form 1-pyrroline-5-carboxylate. The chain is Gamma-glutamyl phosphate reductase from Vibrio vulnificus (strain CMCP6).